Here is a 216-residue protein sequence, read N- to C-terminus: Protein Syd (216 aa).

This sequence belongs to the Syd family.

It localises to the cell inner membrane. Interacts with the SecY protein in vivo. May bind preferentially to an uncomplexed state of SecY, thus functioning either as a chelating agent for excess SecY in the cell or as a regulatory factor that negatively controls the translocase function. The chain is Protein Syd from Shewanella sp. (strain MR-7).